A 630-amino-acid chain; its full sequence is Glutamyl-tRNA(Gln) amidotransferase subunit E (630 aa).

Belongs to the GatB/GatE family. GatE subfamily. Heterodimer of GatD and GatE.

It catalyses the reaction L-glutamyl-tRNA(Gln) + L-glutamine + ATP + H2O = L-glutaminyl-tRNA(Gln) + L-glutamate + ADP + phosphate + H(+). In terms of biological role, allows the formation of correctly charged Gln-tRNA(Gln) through the transamidation of misacylated Glu-tRNA(Gln) in organisms which lack glutaminyl-tRNA synthetase. The reaction takes place in the presence of glutamine and ATP through an activated gamma-phospho-Glu-tRNA(Gln). The GatDE system is specific for glutamate and does not act on aspartate. This chain is Glutamyl-tRNA(Gln) amidotransferase subunit E, found in Methanocaldococcus jannaschii (strain ATCC 43067 / DSM 2661 / JAL-1 / JCM 10045 / NBRC 100440) (Methanococcus jannaschii).